Reading from the N-terminus, the 349-residue chain is ATPase GET3 (349 aa).

27 to 34 (KGGVGKTT) contributes to the ATP binding site. Aspartate 58 is a catalytic residue. Residues glutamate 240 and asparagine 267 each coordinate ATP. Cysteine 280 and cysteine 283 together coordinate Zn(2+).

The protein belongs to the arsA ATPase family. In terms of assembly, homodimer. Component of the Golgi to ER traffic (GET) complex, which is composed of GET1, GET2 and GET3. Within the complex, GET1 and GET2 form a heterotetramer which is stabilized by phosphatidylinositol binding and which binds to the GET3 homodimer. Interacts with the chloride channel protein GEF1.

It localises to the cytoplasm. Its subcellular location is the endoplasmic reticulum. The protein resides in the golgi apparatus. Functionally, ATPase required for the post-translational delivery of tail-anchored (TA) proteins to the endoplasmic reticulum. Recognizes and selectively binds the transmembrane domain of TA proteins in the cytosol. This complex then targets to the endoplasmic reticulum by membrane-bound receptors GET1 and GET2, where the tail-anchored protein is released for insertion. This process is regulated by ATP binding and hydrolysis. ATP binding drives the homodimer towards the closed dimer state, facilitating recognition of newly synthesized TA membrane proteins. ATP hydrolysis is required for insertion. Subsequently, the homodimer reverts towards the open dimer state, lowering its affinity for the GET1-GET2 receptor, and returning it to the cytosol to initiate a new round of targeting. Cooperates with the HDEL receptor ERD2 to mediate the ATP-dependent retrieval of resident ER proteins that contain a C-terminal H-D-E-L retention signal from the Golgi to the ER. Involved in low-level resistance to the oxyanions arsenite and arsenate, and in heat tolerance. The protein is ATPase GET3 of Eremothecium gossypii (strain ATCC 10895 / CBS 109.51 / FGSC 9923 / NRRL Y-1056) (Yeast).